Consider the following 91-residue polypeptide: UPF0213 protein NMC1807 (91 aa).

Residues 4-83 (SNWSVYLILC…AAQKRQLWEQ (80 aa)) enclose the GIY-YIG domain.

The protein belongs to the UPF0213 family.

The polypeptide is UPF0213 protein NMC1807 (Neisseria meningitidis serogroup C / serotype 2a (strain ATCC 700532 / DSM 15464 / FAM18)).